We begin with the raw amino-acid sequence, 222 residues long: Arginine ABC transporter permease protein ArtM (222 aa).

Residues 1–15 are Periplasmic-facing; that stretch reads MFEYLPELMKGLHTS. The region spanning 12 to 208 is the ABC transmembrane type-1 domain; the sequence is LHTSLTLTVA…VVNGLLTLMM (197 aa). A helical membrane pass occupies residues 16–36; it reads LTLTVASLIVALILALIFTII. At 37 to 49 the chain is on the cytoplasmic side; the sequence is LTLKTPVLVWLVR. Residues 50–70 traverse the membrane as a helical segment; the sequence is GYITLFTGTPLLVQIFLIYYG. Topologically, residues 71–79 are periplasmic; the sequence is PGQFPTLQE. Residues 80 to 100 form a helical membrane-spanning segment; sequence YPALWHLLSEPWLCALIALSL. Topologically, residues 101–154 are cytoplasmic; that stretch reads NSAAYTTQLFYGAIRAIPEGQWQSCSALGMSKKDTLAILLPYAFKRSLSSYSNE. The chain crosses the membrane as a helical span at residues 155–175; it reads VVLVFKSTSLAYTITLMEVMG. Residues 176-186 lie on the Periplasmic side of the membrane; the sequence is YSQLLYGRTYD. The chain crosses the membrane as a helical span at residues 187–207; the sequence is VMVFGAAGIIYLVVNGLLTLM. Over 208–222 the chain is Cytoplasmic; sequence MRLIERKALAFERRN.

Belongs to the binding-protein-dependent transport system permease family. HisMQ subfamily. As to quaternary structure, the complex is composed of two ATP-binding proteins (ArtP), two transmembrane proteins (ArtM and ArtQ) and two solute-binding proteins (ArtJ and ArtI).

It localises to the cell inner membrane. Its function is as follows. Part of the ABC transporter complex ArtPIQMJ involved in arginine transport. Probably responsible for the translocation of the substrate across the membrane. The chain is Arginine ABC transporter permease protein ArtM (artM) from Escherichia coli (strain K12).